The sequence spans 417 residues: uncharacterized protein (417 aa).

Helical transmembrane passes span 87–107 (LVVAAACTIVEALNLNLGYWI), 130–150 (IAGTVLGVIVGSLVPYFTPSV), 177–197 (FFITIQALTSLSLAGLDVYAA), and 202–222 (IIDTIIGASLAWAAVSYLWPD). A compositionally biased stretch (low complexity) spans 366 to 398 (APSAPAAAEHKATSSSNSSNSSPGSSNPTTAPT). The tract at residues 366-417 (APSAPAAAEHKATSSSNSSNSSPGSSNPTTAPTDKFRTGSPKTQPEKISAFW) is disordered.

The protein belongs to the YccS/YhfK family.

The protein resides in the cell membrane. This is an uncharacterized protein from Neisseria gonorrhoeae.